We begin with the raw amino-acid sequence, 582 residues long: Proline--tRNA ligase (582 aa).

It belongs to the class-II aminoacyl-tRNA synthetase family. ProS type 1 subfamily. Homodimer.

It is found in the cytoplasm. It catalyses the reaction tRNA(Pro) + L-proline + ATP = L-prolyl-tRNA(Pro) + AMP + diphosphate. Catalyzes the attachment of proline to tRNA(Pro) in a two-step reaction: proline is first activated by ATP to form Pro-AMP and then transferred to the acceptor end of tRNA(Pro). As ProRS can inadvertently accommodate and process non-cognate amino acids such as alanine and cysteine, to avoid such errors it has two additional distinct editing activities against alanine. One activity is designated as 'pretransfer' editing and involves the tRNA(Pro)-independent hydrolysis of activated Ala-AMP. The other activity is designated 'posttransfer' editing and involves deacylation of mischarged Ala-tRNA(Pro). The misacylated Cys-tRNA(Pro) is not edited by ProRS. This Mycobacterium avium (strain 104) protein is Proline--tRNA ligase.